Consider the following 277-residue polypeptide: Thymidylate synthase (277 aa).

DUMP is bound at residue arginine 21. Histidine 51 is a (6R)-5,10-methylene-5,6,7,8-tetrahydrofolate binding site. 139–140 contacts dUMP; sequence RR. Cysteine 159 acts as the Nucleophile in catalysis. Residues 179–182, asparagine 190, and 220–222 contribute to the dUMP site; these read RSAD and HIY. Aspartate 182 lines the (6R)-5,10-methylene-5,6,7,8-tetrahydrofolate pocket. Position 276 (alanine 276) interacts with (6R)-5,10-methylene-5,6,7,8-tetrahydrofolate.

It belongs to the thymidylate synthase family. Bacterial-type ThyA subfamily. Homodimer.

The protein resides in the cytoplasm. It catalyses the reaction dUMP + (6R)-5,10-methylene-5,6,7,8-tetrahydrofolate = 7,8-dihydrofolate + dTMP. It participates in pyrimidine metabolism; dTTP biosynthesis. Functionally, catalyzes the reductive methylation of 2'-deoxyuridine-5'-monophosphate (dUMP) to 2'-deoxythymidine-5'-monophosphate (dTMP) while utilizing 5,10-methylenetetrahydrofolate (mTHF) as the methyl donor and reductant in the reaction, yielding dihydrofolate (DHF) as a by-product. This enzymatic reaction provides an intracellular de novo source of dTMP, an essential precursor for DNA biosynthesis. The protein is Thymidylate synthase of Roseobacter denitrificans (strain ATCC 33942 / OCh 114) (Erythrobacter sp. (strain OCh 114)).